An 884-amino-acid polypeptide reads, in one-letter code: Valine--tRNA ligase (884 aa).

The 'HIGH' region motif lies at 47-57 (PNVTGALHIGH). Residues 525–529 (KMSKS) carry the 'KMSKS' region motif. K528 is a binding site for ATP. Residues 812–884 (AVDFEAELAR…QQRFRDAIGK (73 aa)) adopt a coiled-coil conformation.

The protein belongs to the class-I aminoacyl-tRNA synthetase family. ValS type 1 subfamily. In terms of assembly, monomer.

It is found in the cytoplasm. It carries out the reaction tRNA(Val) + L-valine + ATP = L-valyl-tRNA(Val) + AMP + diphosphate. Catalyzes the attachment of valine to tRNA(Val). As ValRS can inadvertently accommodate and process structurally similar amino acids such as threonine, to avoid such errors, it has a 'posttransfer' editing activity that hydrolyzes mischarged Thr-tRNA(Val) in a tRNA-dependent manner. The sequence is that of Valine--tRNA ligase from Nitratidesulfovibrio vulgaris (strain ATCC 29579 / DSM 644 / CCUG 34227 / NCIMB 8303 / VKM B-1760 / Hildenborough) (Desulfovibrio vulgaris).